The primary structure comprises 195 residues: Sec-independent protein translocase protein TatB (195 aa).

The helical transmembrane segment at 2 to 22 threads the bilayer; sequence FSNVGWGEVLVLLIVALFLIG. Over residues 103-125 the composition is skewed to basic and acidic residues; the sequence is VKDTVDTVRKPNLRESLKADKTK. A disordered region spans residues 103–195; it reads VKDTVDTVRK…APGYGWEDVT (93 aa). 2 stretches are compositionally biased toward polar residues: residues 127–139 and 146–155; these read SAQPQPSLASGSA and VTQQSNAGES.

This sequence belongs to the TatB family. In terms of assembly, the Tat system comprises two distinct complexes: a TatABC complex, containing multiple copies of TatA, TatB and TatC subunits, and a separate TatA complex, containing only TatA subunits. Substrates initially bind to the TatABC complex, which probably triggers association of the separate TatA complex to form the active translocon.

The protein localises to the cell membrane. Functionally, part of the twin-arginine translocation (Tat) system that transports large folded proteins containing a characteristic twin-arginine motif in their signal peptide across membranes. Together with TatC, TatB is part of a receptor directly interacting with Tat signal peptides. TatB may form an oligomeric binding site that transiently accommodates folded Tat precursor proteins before their translocation. This Corynebacterium jeikeium (strain K411) protein is Sec-independent protein translocase protein TatB.